The primary structure comprises 157 residues: S-ribosylhomocysteine lyase (157 aa).

Residues His-54, His-58, and Cys-124 each coordinate Fe cation.

The protein belongs to the LuxS family. As to quaternary structure, homodimer. Fe cation serves as cofactor.

It catalyses the reaction S-(5-deoxy-D-ribos-5-yl)-L-homocysteine = (S)-4,5-dihydroxypentane-2,3-dione + L-homocysteine. Its function is as follows. Involved in the synthesis of autoinducer 2 (AI-2) which is secreted by bacteria and is used to communicate both the cell density and the metabolic potential of the environment. The regulation of gene expression in response to changes in cell density is called quorum sensing. Catalyzes the transformation of S-ribosylhomocysteine (RHC) to homocysteine (HC) and 4,5-dihydroxy-2,3-pentadione (DPD). This chain is S-ribosylhomocysteine lyase, found in Pediococcus pentosaceus (strain ATCC 25745 / CCUG 21536 / LMG 10740 / 183-1w).